A 264-amino-acid polypeptide reads, in one-letter code: Glutamate racemase (264 aa).

Substrate contacts are provided by residues 9–10 (DS) and 41–42 (YG). The active-site Proton donor/acceptor is the cysteine 72. Position 73 to 74 (73 to 74 (NT)) interacts with substrate. Cysteine 183 serves as the catalytic Proton donor/acceptor. A substrate-binding site is contributed by 184-185 (TH).

This sequence belongs to the aspartate/glutamate racemases family.

It catalyses the reaction L-glutamate = D-glutamate. The protein operates within cell wall biogenesis; peptidoglycan biosynthesis. Functionally, provides the (R)-glutamate required for cell wall biosynthesis. This Geobacillus sp. (strain WCH70) protein is Glutamate racemase.